We begin with the raw amino-acid sequence, 115 residues long: DNA-directed RNA polymerase subunit omega (115 aa).

It belongs to the RNA polymerase subunit omega family. As to quaternary structure, the RNAP catalytic core consists of 2 alpha, 1 beta, 1 beta' and 1 omega subunit. When a sigma factor is associated with the core the holoenzyme is formed, which can initiate transcription.

The enzyme catalyses RNA(n) + a ribonucleoside 5'-triphosphate = RNA(n+1) + diphosphate. Functionally, promotes RNA polymerase assembly. Latches the N- and C-terminal regions of the beta' subunit thereby facilitating its interaction with the beta and alpha subunits. In Cutibacterium acnes (strain DSM 16379 / KPA171202) (Propionibacterium acnes), this protein is DNA-directed RNA polymerase subunit omega.